The primary structure comprises 509 residues: Dihydrolipoyl dehydrogenase, mitochondrial (509 aa).

The N-terminal 35 residues, 1-35 (MQSWSRVYRSLAKKGHFNRISHGLQGVSSVPLRTY), are a transit peptide targeting the mitochondrion. Residue Lys-66 is modified to N6-acetyllysine; alternate. Position 66 is an N6-succinyllysine; alternate (Lys-66). FAD-binding positions include 71-80 (EKNETLGGTC) and Lys-89. Cys-80 and Cys-85 form a disulfide bridge. N6-acetyllysine; alternate is present on residues Lys-104, Lys-122, Lys-132, and Lys-143. 4 positions are modified to N6-succinyllysine; alternate: Lys-104, Lys-122, Lys-132, and Lys-143. Residue Gly-154 participates in FAD binding. Lys-159 and Lys-166 each carry N6-succinyllysine. 183–185 (TGS) lines the FAD pocket. Residues 220–227 (GAGVIGVE) and Glu-243 contribute to the NAD(+) site. N6-succinyllysine is present on residues Lys-273 and Lys-277. Val-278 provides a ligand contact to NAD(+). Phosphoserine is present on residues Ser-285 and Ser-297. Gly-314 serves as a coordination point for NAD(+). Lys-334 is modified (N6-acetyllysine; alternate). Lys-334 bears the N6-succinyllysine; alternate mark. Lys-346 is subject to N6-acetyllysine. FAD contacts are provided by residues Asp-355 and 361–364 (MLAH). Lys-410 carries the post-translational modification N6-acetyllysine; alternate. Lys-410 is modified (N6-succinyllysine; alternate). Residues Lys-417 and Lys-420 each carry the N6-acetyllysine modification. Lys-430 carries the post-translational modification N6-succinyllysine. The Proton acceptor role is filled by His-487. At Lys-505 the chain carries N6-acetyllysine; alternate. Lys-505 bears the N6-succinyllysine; alternate mark.

Belongs to the class-I pyridine nucleotide-disulfide oxidoreductase family. As to quaternary structure, homodimer. Part of the multimeric pyruvate dehydrogenase complex that contains multiple copies of pyruvate dehydrogenase (subunits PDHA (PDHA1 or PDHA2) and PDHB, E1), dihydrolipoamide acetyltransferase (DLAT, E2) and lipoamide dehydrogenase (DLD, E3). These subunits are bound to an inner core composed of about 48 DLAT and 12 PDHX molecules (by non covalent bonds). The 2-oxoglutarate dehydrogenase complex is composed of OGDH (2-oxoglutarate dehydrogenase; E1), DLST (dihydrolipoamide succinyltransferase; E2), DLD (dihydrolipoamide dehydrogenase; E3) and the assembly factor KGD4. It contains multiple copies of the three enzymatic components (E1, E2 and E3). In the nucleus, the 2-oxoglutarate dehydrogenase complex associates with KAT2A. Interacts with PDHX. The cofactor is FAD. In terms of processing, tyrosine phosphorylated. In terms of tissue distribution, expressed in liver (at protein level).

It localises to the mitochondrion matrix. The protein resides in the nucleus. The protein localises to the cell projection. Its subcellular location is the cilium. It is found in the flagellum. It localises to the cytoplasmic vesicle. The protein resides in the secretory vesicle. The protein localises to the acrosome. It carries out the reaction N(6)-[(R)-dihydrolipoyl]-L-lysyl-[protein] + NAD(+) = N(6)-[(R)-lipoyl]-L-lysyl-[protein] + NADH + H(+). Functionally, lipoamide dehydrogenase is a component of the glycine cleavage system as well as an E3 component of three alpha-ketoacid dehydrogenase complexes (pyruvate-, alpha-ketoglutarate-, and branched-chain amino acid-dehydrogenase complex). The 2-oxoglutarate dehydrogenase complex is mainly active in the mitochondrion. A fraction of the 2-oxoglutarate dehydrogenase complex also localizes in the nucleus and is required for lysine succinylation of histones: associates with KAT2A on chromatin and provides succinyl-CoA to histone succinyltransferase KAT2A. In monomeric form may have additional moonlighting function as serine protease. Involved in the hyperactivation of spermatazoa during capacitation and in the spermatazoal acrosome reaction. In Mus musculus (Mouse), this protein is Dihydrolipoyl dehydrogenase, mitochondrial (Dld).